Reading from the N-terminus, the 29-residue chain is Lambda-theraphotoxin-Ec2c (29 aa).

3 disulfide bridges follow: cysteine 2/cysteine 16, cysteine 9/cysteine 21, and cysteine 15/cysteine 25.

Belongs to the neurotoxin 30 (phrixotoxin) family. In terms of tissue distribution, expressed by the venom gland.

It localises to the secreted. Functionally, both insecticidal and vertebrate neurotoxin that potently blocks insect calcium-activated potassium (BKCa) channels (Slo-type) in cockroach dorsal unpaired median (DUM) neurons (IC(50)=24.6 nM). This occurs in the absence of any shifts in the voltage dependence of activation. May interact with the turret and/or loop region of the external entrance to the channel and does not project deeply into the pore of the channel. Also shows toxicity to mice by introcerebroventicular injection. This chain is Lambda-theraphotoxin-Ec2c, found in Eucratoscelus constrictus (African red-rump baboon spider).